The following is a 742-amino-acid chain: Protein-lysine N-methyltransferase SMYD4 (742 aa).

110 to 112 (RSA) is an S-adenosyl-L-methionine binding site. The SET domain maps to 230–569 (SSLSLNFSTE…SGQEIFHCYG (340 aa)). Residues Cys295, Cys298, Cys308, Cys311, Cys317, Cys321, His330, and Cys334 each contribute to the Zn(2+) site. Residues 295–334 (CHHCLKQLLASIPCCGCSYAKYCSQNCADVAWEQYHRTEC) form an MYND-type zinc finger. Residues Asn418, 534-535 (NH), and Tyr568 contribute to the S-adenosyl-L-methionine site.

The protein belongs to the class V-like SAM-binding methyltransferase superfamily.

Its subcellular location is the nucleus. The protein localises to the cytoplasm. It carries out the reaction L-lysyl-[protein] + S-adenosyl-L-methionine = N(6)-methyl-L-lysyl-[protein] + S-adenosyl-L-homocysteine + H(+). Functionally, protein-lysine N-methyltransferase. Monomethylates PRMT5, modulating its transcriptional activity. May also act as a histone methyltransferase. Plays a critical role in cardiac development. Acts as a key epigenetic regulator of gene expression during cardiac development via its dual activities as a methyltransferase and negative regulator of HDAC1. The sequence is that of Protein-lysine N-methyltransferase SMYD4 (SMYD4) from Gallus gallus (Chicken).